Reading from the N-terminus, the 25-residue chain is Glutamine synthetase 2 isozyme (25 aa).

The protein belongs to the glutamine synthetase family. Homohexamer.

Its subcellular location is the plastid. It localises to the chloroplast. The catalysed reaction is L-glutamate + NH4(+) + ATP = L-glutamine + ADP + phosphate + H(+). Its function is as follows. Plays a key role in the nitrogen metabolism of microorganisms, animals and plants. This Emiliania huxleyi (Coccolithophore) protein is Glutamine synthetase 2 isozyme.